A 62-amino-acid chain; its full sequence is Large ribosomal subunit protein bL33c (62 aa).

This sequence belongs to the bacterial ribosomal protein bL33 family.

The protein resides in the plastid. Its subcellular location is the chloroplast. The protein is Large ribosomal subunit protein bL33c of Cyanidioschyzon merolae (strain NIES-3377 / 10D) (Unicellular red alga).